Consider the following 196-residue polypeptide: HTH-type transcriptional regulator BetI (196 aa).

One can recognise an HTH tetR-type domain in the interval 8-68 (PVRREQLIRA…AAMRQILREL (61 aa)). Residues 31–50 (TVATIAKKAGLSSGIVAHYF) constitute a DNA-binding region (H-T-H motif).

The protein operates within amine and polyamine biosynthesis; betaine biosynthesis via choline pathway [regulation]. Repressor involved in the biosynthesis of the osmoprotectant glycine betaine. It represses transcription of the choline transporter BetT and the genes of BetAB involved in the synthesis of glycine betaine. In Stenotrophomonas maltophilia (strain R551-3), this protein is HTH-type transcriptional regulator BetI.